The following is a 161-amino-acid chain: Phosphopantetheine adenylyltransferase (161 aa).

Thr11 is a binding site for substrate. Residues 11 to 12 and His19 each bind ATP; that span reads TF. The substrate site is built by Lys43, Thr75, and Arg89. ATP-binding positions include 90-92, Glu100, and 125-131; these read GLR and YSFLSSS.

Belongs to the bacterial CoaD family. In terms of assembly, homohexamer. The cofactor is Mg(2+).

The protein resides in the cytoplasm. It carries out the reaction (R)-4'-phosphopantetheine + ATP + H(+) = 3'-dephospho-CoA + diphosphate. It participates in cofactor biosynthesis; coenzyme A biosynthesis; CoA from (R)-pantothenate: step 4/5. Reversibly transfers an adenylyl group from ATP to 4'-phosphopantetheine, yielding dephospho-CoA (dPCoA) and pyrophosphate. This is Phosphopantetheine adenylyltransferase from Listeria innocua serovar 6a (strain ATCC BAA-680 / CLIP 11262).